Here is a 127-residue protein sequence, read N- to C-terminus: Large ribosomal subunit protein eL8 (127 aa).

It belongs to the eukaryotic ribosomal protein eL8 family. In terms of assembly, part of the 50S ribosomal subunit. Probably part of the RNase P complex.

It is found in the cytoplasm. Functionally, multifunctional RNA-binding protein that recognizes the K-turn motif in ribosomal RNA, the RNA component of RNase P, box H/ACA, box C/D and box C'/D' sRNAs. In Desulfurococcus amylolyticus (strain DSM 18924 / JCM 16383 / VKM B-2413 / 1221n) (Desulfurococcus kamchatkensis), this protein is Large ribosomal subunit protein eL8.